A 409-amino-acid chain; its full sequence is Immunity-related GTPase family M protein 1 (409 aa).

The 177-residue stretch at 75–251 folds into the IRG-type G domain; the sequence is IPVSIFVTGD…PKLRDTLHKD (177 aa). GTP-binding positions include 84–91, 109–113, and 191–193; these read DSGNGMSS, TGVVR, and KLD. Ser-202 carries the phosphoserine modification. Position 232–234 (232–234) interacts with GTP; sequence SSL. Lys-270 participates in a covalent cross-link: Glycyl lysine isopeptide (Lys-Gly) (interchain with G-Cter in ubiquitin). Positions 350-374 are alpha-K amphipathic helix; that stretch reads KLRLMTCAIVNAFFRLLRFLPCVCC.

It belongs to the TRAFAC class dynamin-like GTPase superfamily. IRG family. In terms of assembly, interacts with ULK1; promoting the coassembly of ULK1 and BECN1. Interacts with BECN1; enhancing BECN1-interacting partners and influencing the composition of the BECN1 complex. Interacts with ATG16L1. Interacts with NOD2; promoting Irgm1 'Lys-63'-linked polyubiquitination, which is required for interactions with the core autophagy factors. Interacts with STX17; promoting STX17 recruitment to autophagosomes. Interacts with ATG8 proteins (GABARAP, GABARAPL1, GABARAPL2, MAP1LC3A, MAP1LC3B and MAP1LC3C); promoting STX17 recruitment to autophagosomes. Interacts with TFEB; promoting association between TFEB and PPP3CB and TFEB dephosphorylation. Interacts with PPP3CB; promoting association between TFEB and PPP3CB and TFEB dephosphorylation. Interacts with NLRP3; preventing NLRP3 inflammasome assembly and promoting SQSTM1/p62-dependent autophagic degradation of NLRP3. Interacts with CGAS; promoting SQSTM1/p62-dependent autophagic degradation of CGAS. Interacts with RIGI/RIG-I; promoting SQSTM1/p62-dependent autophagic degradation of RIGI/RIG-I. Interacts with NOD1; promoting SQSTM1/p62-dependent autophagic degradation of RIGI/RIG-I. Interacts with NOD2; promoting SQSTM1/p62-dependent autophagic degradation of RIGI/RIG-I. Interacts with RIPK2; promoting SQSTM1/p62-dependent autophagic degradation of RIGI/RIG-I. Interacts with PIK3CA. Post-translationally, palmitoylated on C-terminal Cys residues. Palmitoylation, together with the alpha-K amphipathic helix, which binds phosphatidylinositol, mediate binding to membranes. In terms of processing, ubiquitinated via 'Lys-63'-linked polyubiquitination in a NOD2-dependent process. 'Lys-63'-linked polyubiquitination is required for interactions with the core autophagy factors. Ubiquitination at Lys-270 by the DCX(WDR77) complex, also named CLR4(WDR77) complex, in intestinal cells, leading to its degradation by the proteasome. Expressed in lung and primary macrophages.

It is found in the golgi apparatus membrane. It localises to the cell membrane. The protein resides in the cytoplasmic vesicle. Its subcellular location is the phagosome membrane. The protein localises to the autophagosome membrane. It is found in the lysosome membrane. It localises to the late endosome membrane. The protein resides in the mitochondrion membrane. Its subcellular location is the lipid droplet. The protein localises to the cell projection. It is found in the phagocytic cup. The enzyme catalyses GTP + H2O = GDP + phosphate + H(+). Its function is as follows. Immunity-related GTPase that plays important roles in innate immunity and inflammatory response. Acts as a dynamin-like protein that binds to intracellular membranes and promotes remodeling and trafficking of those membranes. Required for clearance of acute protozoan and bacterial infections by interacting with autophagy and lysosome regulatory proteins, thereby promoting the fusion of phagosomes with lysosomes for efficient degradation of cargo including microbes. Regulates selective autophagy, including xenophagy and mitophagy, both directly and indirectly. Directly regulates autophagy by acting as a molecular adapter that promotes the coassembly of the core autophagy machinery to mediate antimicrobial defense: Irgm1 (1) activates AMPK, which in turn phosphorylates ULK1 and BECN1 to induce autophagy, (2) promotes the coassembly of ULK1 and BECN1, enhancing BECN1-interacting partners and (3) influences the composition of the BECN1 complex, by competing with the negative regulators BCL2 and RUBCN, to trigger autophagy. Also activates autophagy by promoting recruitment of STX17 to autophagosomes. In collaboration with ATG8 proteins, regulate lysosomal biogenesis, a fundamental process for any autophagic pathway, by promoting TFEB dephosphorylation. Also modulates autophagy by assisting with autophagosome formation and preventing lysosomal deacidification. Regulates autophagy by affecting mitochondrial fusion and fission. Also involved in M1 macrophage activation for the production of proinflammatory cytokines. While activating autophagy, acts as a key negative regulator of the inflammatory and interferon responses both by (1) promoting mitophagy and (2) mediating autophagy-dependent degradation of effectors of the inflammatory response. Promotes degradation of damaged and IFNG/IFN-gamma-stressed mitochondria via mitophagy, preventing cytosolic release of ligands that activate inflammation. Negatively regulates interferon-signaling in hematopoietic stem cells, preserving hematopoietic stem cell number and function. Promotes expansion of activated CD4(+) T-cells by inhibiting IFNG/IFN-gamma signaling, thereby preventing Ifng-mediated cell death of CD4(+) T-cells. Acts as a suppressor of inflammation by promoting recruitment of inflammation effectors, such as CGAS, RIGI/RIG-I and NLRP3, to autophagosome membranes, leading to their SQSTM1/p62-dependent autophagic degradation. Also directly inhibits assembly of the NLRP3 inflammasome by preventing the association between NLRP3 and PYCARD. Acts as a negative regulator of antiviral innate immune response by suppressing the RIPK2-dependent pro-inflammatory response: mediates recruitment of RIPosomes, composed of RIPK2 and NOD1 or NOD2, to autophagosome membranes, promoting their SQSTM1/p62-dependent autophagic degradation. The chain is Immunity-related GTPase family M protein 1 from Mus musculus (Mouse).